Consider the following 354-residue polypeptide: Protein RecA (354 aa).

Position 68-75 (68-75 (GPESSGKT)) interacts with ATP.

The protein belongs to the RecA family.

It localises to the cytoplasm. Its function is as follows. Can catalyze the hydrolysis of ATP in the presence of single-stranded DNA, the ATP-dependent uptake of single-stranded DNA by duplex DNA, and the ATP-dependent hybridization of homologous single-stranded DNAs. It interacts with LexA causing its activation and leading to its autocatalytic cleavage. This chain is Protein RecA, found in Synechocystis sp. (strain ATCC 27184 / PCC 6803 / Kazusa).